The chain runs to 100 residues: UPF0248 protein APE_0939 (100 aa).

It belongs to the UPF0248 family.

This is UPF0248 protein APE_0939 from Aeropyrum pernix (strain ATCC 700893 / DSM 11879 / JCM 9820 / NBRC 100138 / K1).